The primary structure comprises 375 residues: Trans-enoyl reductase BOA5 (375 aa).

Positions 1–16 are enriched in polar residues; that stretch reads MQAVIQTGPGTLQLTE. The interval 1–21 is disordered; that stretch reads MQAVIQTGPGTLQLTENVPKP. 42–45 provides a ligand contact to NADP(+); that stretch reads SDWK. Residue 121 to 128 coordinates substrate; it reads VGIVTTGL. The disordered stretch occupies residues 147–168; that stretch reads GSAAPQKTRVGPRGWSGGDALT. NADP(+) is bound by residues 185-188, 208-211, Tyr-226, and 273-274; these read STST, SPHN, and LD. 294 to 298 is a binding site for substrate; sequence ALTIF. 363–364 contacts NADP(+); it reads VS.

Belongs to the zinc-containing alcohol dehydrogenase family. As to quaternary structure, monomer.

The protein operates within polyketide biosynthesis. Trans-enoyl reductase; part of the gene cluster A that mediates the biosynthesis of botcinic acid and its botcinin derivatives, acetate-derived polyketides that contribute to virulence when combined with the sesquiterpene botrydial. Botcinic acid and its derivatives have been shown to induce chlorosis and necrosis during host plant infection, but also have antifungal activities. Two polyketide synthases, BOA6 and BOA9, are involved in the biosynthesis of botcinins. BOA6 mediates the formation of the per-methylated tetraketide core by condensation of four units of malonyl-CoA with one unit of acetyl-CoA, which would be methylated in activated methylene groups to yield a bicyclic acid intermediate that could then either be converted to botrylactone derivatives or lose the starter acetate unit through a retro-Claisen type C-C bond cleavage to yield botcinin derivatives. The second polyketide synthase, BOA9, is probably required for the biosynthesis of the tetraketide side chain of botcinins. The methyltransferase (MT) domain within BOA6 is probably responsible for the incorporation of four methyl groups. The trans-enoyl reductase BOA5 might take over the enoyl reductase function of BOA6 that misses an ER domain. The monooxygenases BOA2, BOA3 and BOA4 might be involved in further hydroxylations at C4, C5 and C8, whereas BOA7, close to BOA9, could potentially be involved in the hydroxylation at C4 in the side chain of botcinins. The chain is Trans-enoyl reductase BOA5 from Botryotinia fuckeliana (strain B05.10) (Noble rot fungus).